The chain runs to 219 residues: Proteasome subunit beta type-9 (219 aa).

Residues 1-20 (MLRAGAPTAGSFRTEEVHTG) constitute a propeptide, removed in mature form. Thr21 serves as the catalytic Nucleophile. Residues Lys53 and Lys109 each carry the N6-acetyllysine modification.

The protein belongs to the peptidase T1B family. The 26S proteasome consists of a 20S proteasome core and two 19S regulatory subunits. The 20S proteasome core is composed of 28 subunits that are arranged in four stacked rings, resulting in a barrel-shaped structure. The two end rings are each formed by seven alpha subunits, and the two central rings are each formed by seven beta subunits. The catalytic chamber with the active sites is on the inside of the barrel. Component of the immunoproteasome, where it displaces the equivalent housekeeping subunit PSMB6. Component of the spermatoproteasome, a form of the proteasome specifically found in testis. Autocleaved. The resulting N-terminal Thr residue of the mature subunit is responsible for the nucleophile proteolytic activity.

The protein localises to the cytoplasm. It is found in the nucleus. The enzyme catalyses Cleavage of peptide bonds with very broad specificity.. Functionally, the proteasome is a multicatalytic proteinase complex which is characterized by its ability to cleave peptides with Arg, Phe, Tyr, Leu, and Glu adjacent to the leaving group at neutral or slightly basic pH. The proteasome has an ATP-dependent proteolytic activity. This subunit is involved in antigen processing to generate class I binding peptides. The chain is Proteasome subunit beta type-9 (Psmb9) from Mus musculus bactrianus (Southwestern Asian house mouse).